We begin with the raw amino-acid sequence, 399 residues long: Subtilisin-like protease 4 (399 aa).

The first 19 residues, 1–19 (MVCLKTLSVFLAAFAVADA), serve as a signal peptide directing secretion. The propeptide occupies 20–118 (RAVFKTQSNK…VEQDQVVRIS (99 aa)). The region spanning 38-117 (YIVVMKDGVS…YVEQDQVVRI (80 aa)) is the Inhibitor I9 domain. The 272-residue stretch at 128–399 (SWGLGRVSHR…NRLLYNGSGQ (272 aa)) folds into the Peptidase S8 domain. Active-site charge relay system residues include Asp160 and His191. Asn252 carries N-linked (GlcNAc...) asparagine glycosylation. Ser346 serves as the catalytic Charge relay system. The segment covering 380–392 (AISNPGSGTTNRL) has biased composition (polar residues). Residues 380–399 (AISNPGSGTTNRLLYNGSGQ) are disordered. An N-linked (GlcNAc...) asparagine glycan is attached at Asn395.

Belongs to the peptidase S8 family.

It localises to the secreted. In terms of biological role, secreted subtilisin-like serine protease with keratinolytic activity that contributes to pathogenicity. This chain is Subtilisin-like protease 4 (SUB4), found in Arthroderma gypseum (strain ATCC MYA-4604 / CBS 118893) (Microsporum gypseum).